Reading from the N-terminus, the 367-residue chain is Flagellar P-ring protein (367 aa).

Residues 1–21 (MYVFKALAGIVLALVATLAHA) form the signal peptide.

This sequence belongs to the FlgI family. As to quaternary structure, the basal body constitutes a major portion of the flagellar organelle and consists of four rings (L,P,S, and M) mounted on a central rod.

It is found in the periplasm. The protein localises to the bacterial flagellum basal body. Assembles around the rod to form the L-ring and probably protects the motor/basal body from shearing forces during rotation. The protein is Flagellar P-ring protein of Salmonella paratyphi C (strain RKS4594).